Consider the following 255-residue polypeptide: ATP synthase subunit b 1 (255 aa).

The helical transmembrane segment at 5–22 threads the bilayer; it reads WITVAAQIVNFLLLIWLL.

It belongs to the ATPase B chain family. In terms of assembly, F-type ATPases have 2 components, F(1) - the catalytic core - and F(0) - the membrane proton channel. F(1) has five subunits: alpha(3), beta(3), gamma(1), delta(1), epsilon(1). F(0) has three main subunits: a(1), b(2) and c(10-14). The alpha and beta chains form an alternating ring which encloses part of the gamma chain. F(1) is attached to F(0) by a central stalk formed by the gamma and epsilon chains, while a peripheral stalk is formed by the delta and b chains.

It is found in the cell inner membrane. In terms of biological role, f(1)F(0) ATP synthase produces ATP from ADP in the presence of a proton or sodium gradient. F-type ATPases consist of two structural domains, F(1) containing the extramembraneous catalytic core and F(0) containing the membrane proton channel, linked together by a central stalk and a peripheral stalk. During catalysis, ATP synthesis in the catalytic domain of F(1) is coupled via a rotary mechanism of the central stalk subunits to proton translocation. Functionally, component of the F(0) channel, it forms part of the peripheral stalk, linking F(1) to F(0). The protein is ATP synthase subunit b 1 of Dinoroseobacter shibae (strain DSM 16493 / NCIMB 14021 / DFL 12).